Consider the following 100-residue polypeptide: Class II hydrophobin FOXG_02746 (100 aa).

Positions 1 to 17 (MQFYTIVSLFLAGTAYA) are cleaved as a signal peptide. Disulfide bonds link cysteine 29–cysteine 79, cysteine 40–cysteine 70, cysteine 41–cysteine 53, and cysteine 80–cysteine 92.

This sequence belongs to the cerato-ulmin hydrophobin family. Homodimer. Homodimers further self-assemble to form highly ordered films at water-air interfaces through intermolecular interactions.

The protein localises to the secreted. The protein resides in the cell wall. Functionally, aerial growth, conidiation, and dispersal of filamentous fungi in the environment rely upon a capability of their secreting small amphipathic proteins called hydrophobins (HPBs) with low sequence identity. Class I can self-assemble into an outermost layer of rodlet bundles on aerial cell surfaces, conferring cellular hydrophobicity that supports fungal growth, development and dispersal; whereas Class II form highly ordered films at water-air interfaces through intermolecular interactions but contribute nothing to the rodlet structure. FOXG_02746 is a class II hydrophobin that is likely required for plant colonization. This Fusarium oxysporum f. sp. lycopersici (strain 4287 / CBS 123668 / FGSC 9935 / NRRL 34936) (Fusarium vascular wilt of tomato) protein is Class II hydrophobin FOXG_02746.